Consider the following 195-residue polypeptide: Ferredoxin-2, mitochondrial (195 aa).

Residues 1 to 61 (MAAAAAVRAG…RRLRTSIGVC (61 aa)) constitute a mitochondrion transit peptide. One can recognise a 2Fe-2S ferredoxin-type domain in the interval 81–182 (NVVYIDRSGR…GMELTLPKVT (102 aa)). Cysteine 117, cysteine 123, cysteine 126, and cysteine 163 together coordinate [2Fe-2S] cluster.

The protein belongs to the adrenodoxin/putidaredoxin family. As to quaternary structure, component of the mitochondrial core iron-sulfur cluster (ISC) complex composed of NFS1, LYRM4, NDUFAB1, ISCU, FXN, and FDX2; this complex is a heterohexamer containing two copies of each monomer. Form a heterodimer complex with NFS1. Requires [2Fe-2S] cluster as cofactor.

The protein resides in the mitochondrion. Its subcellular location is the mitochondrion matrix. Electron donor, of the core iron-sulfur cluster (ISC) assembly complex, that acts to reduce the persulfide into sulfide during [2Fe-2S] clusters assembly on the scaffolding protein ISCU. The core iron-sulfur cluster (ISC) assembly complex is involved in the de novo synthesis of a [2Fe-2S] cluster, the first step of the mitochondrial iron-sulfur protein biogenesis. This process is initiated by the cysteine desulfurase complex (NFS1:LYRM4:NDUFAB1) that produces persulfide which is delivered on the scaffold protein ISCU in a FXN-dependent manner. Then this complex is stabilized by FDX2 which provides reducing equivalents to accomplish the [2Fe-2S] cluster assembly. Finally, the [2Fe-2S] cluster is transferred from ISCU to chaperone proteins, including HSCB, HSPA9 and GLRX5. Essential for coenzyme Q biosynthesis: together with FDXR, transfers the electrons required for the hydroxylation reaction performed by COQ6. The protein is Ferredoxin-2, mitochondrial of Danio rerio (Zebrafish).